Reading from the N-terminus, the 678-residue chain is RNA helicase NPH-II (678 aa).

In terms of domain architecture, Helicase ATP-binding spans F175–H351. ATP is bound at residue G188–T195. The short motif at D300–H303 is the DEXH box element. The 176-residue stretch at S371–L546 folds into the Helicase C-terminal domain.

Belongs to the DEAD box helicase family. DEAH subfamily. As to quaternary structure, monomer.

The protein localises to the virion. It catalyses the reaction ATP + H2O = ADP + phosphate + H(+). Its function is as follows. NTP-dependent helicase that catalyzes unidirectional unwinding of 3'tailed duplex RNAs and plays an important role during transcription of early mRNAs, presumably by preventing R-loop formation behind the elongating RNA polymerase. Might also play a role in the export of newly synthesized mRNA chains out of the core into the cytoplasm. Required for replication and propagation of viral particles. The chain is RNA helicase NPH-II (OPG084) from Oryctolagus cuniculus (Rabbit).